Reading from the N-terminus, the 527-residue chain is Probable malate:quinone oxidoreductase (527 aa).

It belongs to the MQO family. Requires FAD as cofactor.

The enzyme catalyses (S)-malate + a quinone = a quinol + oxaloacetate. Its pathway is carbohydrate metabolism; tricarboxylic acid cycle; oxaloacetate from (S)-malate (quinone route): step 1/1. The chain is Probable malate:quinone oxidoreductase from Pectobacterium carotovorum subsp. carotovorum (strain PC1).